A 341-amino-acid chain; its full sequence is Glycerol-3-phosphate dehydrogenase [NAD(P)+] (341 aa).

NADPH contacts are provided by Ser-14, Phe-15, Arg-35, and Lys-108. Sn-glycerol 3-phosphate-binding residues include Lys-108 and Gly-136. Ala-140 lines the NADPH pocket. Residues Lys-191, Asp-244, Ser-254, Arg-255, and Asn-256 each coordinate sn-glycerol 3-phosphate. The active-site Proton acceptor is Lys-191. Arg-255 is an NADPH binding site. Residues Val-279 and Glu-281 each coordinate NADPH.

It belongs to the NAD-dependent glycerol-3-phosphate dehydrogenase family.

Its subcellular location is the cytoplasm. It catalyses the reaction sn-glycerol 3-phosphate + NAD(+) = dihydroxyacetone phosphate + NADH + H(+). The enzyme catalyses sn-glycerol 3-phosphate + NADP(+) = dihydroxyacetone phosphate + NADPH + H(+). It functions in the pathway membrane lipid metabolism; glycerophospholipid metabolism. Its function is as follows. Catalyzes the reduction of the glycolytic intermediate dihydroxyacetone phosphate (DHAP) to sn-glycerol 3-phosphate (G3P), the key precursor for phospholipid synthesis. This chain is Glycerol-3-phosphate dehydrogenase [NAD(P)+], found in Pseudomonas syringae pv. syringae (strain B728a).